The primary structure comprises 248 residues: 2,3-bisphosphoglycerate-dependent phosphoglycerate mutase (248 aa).

Residues R8–N15, T21–G22, R60, E87–Y90, K98, and R114–R115 each bind substrate. H9 functions as the Tele-phosphohistidine intermediate in the catalytic mechanism. Catalysis depends on E87, which acts as the Proton donor/acceptor. The interval D118–R137 is disordered. Over residues T127–R137 the composition is skewed to basic and acidic residues. Residue G183–N184 participates in substrate binding.

This sequence belongs to the phosphoglycerate mutase family. BPG-dependent PGAM subfamily. In terms of assembly, homodimer.

It carries out the reaction (2R)-2-phosphoglycerate = (2R)-3-phosphoglycerate. It functions in the pathway carbohydrate degradation; glycolysis; pyruvate from D-glyceraldehyde 3-phosphate: step 3/5. Functionally, catalyzes the interconversion of 2-phosphoglycerate and 3-phosphoglycerate. The polypeptide is 2,3-bisphosphoglycerate-dependent phosphoglycerate mutase (Cupriavidus necator (strain ATCC 17699 / DSM 428 / KCTC 22496 / NCIMB 10442 / H16 / Stanier 337) (Ralstonia eutropha)).